Here is a 930-residue protein sequence, read N- to C-terminus: Translation initiation factor IF-2 (930 aa).

Disordered regions lie at residues 160–179 (EPVEAAVDTSAPTRFSFTDG) and 208–301 (AKRA…AAAP). The span at 208–227 (AKRAAEEAKRTQPRAEKPAD) shows a compositional bias: basic and acidic residues. Basic residues-rich tracts occupy residues 263-272 (GHGHKKHHHG) and 288-301 (KRGAGKAVKKAAAP). The region spanning 431–600 (TRAPVVTVMG…SLQAEVLELT (170 aa)) is the tr-type G domain. The G1 stretch occupies residues 440-447 (GHVDHGKT). A GTP-binding site is contributed by 440–447 (GHVDHGKT). The G2 stretch occupies residues 465-469 (GITQH). The interval 486-489 (DTPG) is G3. Residues 486-490 (DTPGH) and 540-543 (NKCD) each bind GTP. Residues 540–543 (NKCD) form a G4 region. The segment at 576 to 578 (SAH) is G5.

The protein belongs to the TRAFAC class translation factor GTPase superfamily. Classic translation factor GTPase family. IF-2 subfamily.

Its subcellular location is the cytoplasm. In terms of biological role, one of the essential components for the initiation of protein synthesis. Protects formylmethionyl-tRNA from spontaneous hydrolysis and promotes its binding to the 30S ribosomal subunits. Also involved in the hydrolysis of GTP during the formation of the 70S ribosomal complex. This chain is Translation initiation factor IF-2, found in Cellvibrio japonicus (strain Ueda107) (Pseudomonas fluorescens subsp. cellulosa).